The primary structure comprises 308 residues: Ribosomal RNA small subunit methyltransferase H (308 aa).

Residues 36-38 (GGH), Asp55, Phe86, Asp103, and Gln110 contribute to the S-adenosyl-L-methionine site.

This sequence belongs to the methyltransferase superfamily. RsmH family.

The protein resides in the cytoplasm. The enzyme catalyses cytidine(1402) in 16S rRNA + S-adenosyl-L-methionine = N(4)-methylcytidine(1402) in 16S rRNA + S-adenosyl-L-homocysteine + H(+). Specifically methylates the N4 position of cytidine in position 1402 (C1402) of 16S rRNA. The protein is Ribosomal RNA small subunit methyltransferase H of Helicobacter pylori (strain P12).